The chain runs to 901 residues: Valine--tRNA ligase (901 aa).

The interval 1 to 37 (MLPGCYTHRLNMSDTQDPPQDESTTDESADALDGEYD) is disordered. The span at 19 to 35 (PQDESTTDESADALDGE) shows a compositional bias: acidic residues. Positions 72–82 (PTVSGNLHMGH) match the 'HIGH' region motif. The short motif at 572–576 (AMSKS) is the 'KMSKS' region element. Lysine 575 serves as a coordination point for ATP.

This sequence belongs to the class-I aminoacyl-tRNA synthetase family. ValS type 2 subfamily.

It is found in the cytoplasm. It catalyses the reaction tRNA(Val) + L-valine + ATP = L-valyl-tRNA(Val) + AMP + diphosphate. Functionally, catalyzes the attachment of valine to tRNA(Val). As ValRS can inadvertently accommodate and process structurally similar amino acids such as threonine, to avoid such errors, it has a 'posttransfer' editing activity that hydrolyzes mischarged Thr-tRNA(Val) in a tRNA-dependent manner. The chain is Valine--tRNA ligase from Haloarcula marismortui (strain ATCC 43049 / DSM 3752 / JCM 8966 / VKM B-1809) (Halobacterium marismortui).